The chain runs to 88 residues: Small ribosomal subunit protein bS20 (88 aa).

Over residues 1–23 the composition is skewed to basic and acidic residues; that stretch reads MPNTKSAEKALRVADANRQENRR. Residues 1–29 form a disordered region; it reads MPNTKSAEKALRVADANRQENRRAKSQVK.

Belongs to the bacterial ribosomal protein bS20 family.

Its function is as follows. Binds directly to 16S ribosomal RNA. The polypeptide is Small ribosomal subunit protein bS20 (Dehalococcoides mccartyi (strain ATCC BAA-2100 / JCM 16839 / KCTC 5957 / BAV1)).